A 457-amino-acid chain; its full sequence is Aromatic amino acid transport protein AroP (457 aa).

Over 1-18 (MMEGQQHGEQLKRGLKNR) the chain is Cytoplasmic. A helical transmembrane segment spans residues 19–39 (HIQLIALGGAIGTGLFLGSAS). The Periplasmic segment spans residues 40-42 (VIQ). Residues 43–63 (SAGPGIILGYAIAGFIAFLIM) form a helical membrane-spanning segment. At 64-98 (RQLGEMVVEEPVAGSFSHFAYKYWGSFAGFASGWN) the chain is on the cytoplasmic side. A helical transmembrane segment spans residues 99 to 119 (YWVLYVLVAMAELTAVGKYIQ). The Periplasmic portion of the chain corresponds to 120 to 124 (FWYPE). Residues 125 to 145 (IPTWVSAAVFFVVINAINLTN) traverse the membrane as a helical segment. Topologically, residues 146–147 (VK) are cytoplasmic. Residues 148–168 (VFGEMEFWFAIIKVIAVVAMI) traverse the membrane as a helical segment. The Periplasmic segment spans residues 169-192 (IFGGWLLFSGNGGPQATVSNLWDQ). The helical transmembrane segment at 193-213 (GGFLPHGFTGLVMMMAIIMFS) threads the bilayer. Residues 214-239 (FGGLELVGITAAEADNPEQSIPKATN) are Cytoplasmic-facing. The helical transmembrane segment at 240–260 (QVIYRILIFYIGSLAVLLSLM) threads the bilayer. At 261-279 (PWTRVTADTSPFVLIFHEL) the chain is on the periplasmic side. Residues 280 to 300 (GDTFVANALNIVVLTAALSVY) form a helical membrane-spanning segment. Over 301–330 (NSCVYCNSRMLFGLAQQGNAPKALASVDKR) the chain is Cytoplasmic. The helical transmembrane segment at 331-351 (GVPVNTILVSALVTALCVLIN) threads the bilayer. Residues 352-359 (YLAPESAF) are Periplasmic-facing. A helical membrane pass occupies residues 360 to 380 (GLLMALVVSALVINWAMISLA). At 381–402 (HMKFRRAKQEQGVVTRFPALLY) the chain is on the cytoplasmic side. A helical membrane pass occupies residues 403–423 (PLGNWICLLFMAAVLVIMLMT). Over 424–426 (PGM) the chain is Periplasmic. Residues 427-447 (AISVYLIPVWLIVLGIGYLFK) form a helical membrane-spanning segment. At 448–457 (EKTAKAVKAH) the chain is on the cytoplasmic side.

Belongs to the amino acid-polyamine-organocation (APC) superfamily. Amino acid transporter (AAT) (TC 2.A.3.1) family.

Its subcellular location is the cell inner membrane. The enzyme catalyses L-phenylalanine(in) + H(+)(in) = L-phenylalanine(out) + H(+)(out). It catalyses the reaction L-tryptophan(in) + H(+)(in) = L-tryptophan(out) + H(+)(out). It carries out the reaction L-tyrosine(in) + H(+)(in) = L-tyrosine(out) + H(+)(out). With respect to regulation, strong, mutual inhibition of uptake by tyrosine, phenylalanine, and tryptophan. Transport is also inhibited by the aromatic analogs p-fluorophenylalanine, beta-2-thienylalanine and 5-methyltryptophan. Its function is as follows. Permease that is involved in the active transport across the cytoplasmic membrane of all three aromatic amino acids, phenylalanine, tyrosine and tryptophan. This chain is Aromatic amino acid transport protein AroP, found in Escherichia coli (strain K12).